The following is a 188-amino-acid chain: Kappa-casein (188 aa).

A signal peptide spans 1–21; sequence MMKSSFLIVPILALTLPFLGA. 2 O-linked (GalNAc...) threonine glycosylation sites follow: Thr143 and Thr148. At Thr163 the chain carries Phosphothreonine. Ser167 is modified (phosphoserine; alternate). An O-linked (GalNAc...) serine; alternate glycan is attached at Ser167. Residue Thr184 is glycosylated (O-linked (GalNAc...) threonine). A Phosphoserine modification is found at Ser185.

It belongs to the kappa-casein family. Mammary gland specific. Secreted in milk.

The protein localises to the secreted. In terms of biological role, kappa-casein stabilizes micelle formation, preventing casein precipitation in milk. The sequence is that of Kappa-casein (CSN3) from Sus scrofa (Pig).